A 105-amino-acid chain; its full sequence is Iron-sulfur cluster assembly protein CyaY (105 aa).

This sequence belongs to the frataxin family.

Functionally, involved in iron-sulfur (Fe-S) cluster assembly. May act as a regulator of Fe-S biogenesis. The sequence is that of Iron-sulfur cluster assembly protein CyaY from Chromobacterium violaceum (strain ATCC 12472 / DSM 30191 / JCM 1249 / CCUG 213 / NBRC 12614 / NCIMB 9131 / NCTC 9757 / MK).